The sequence spans 89 residues: RNA-binding protein Hfq (89 aa).

Positions 9–68 constitute a Sm domain; the sequence is EPFLNALRKEKVPVSIYLVNGIKLQGQIESFDQFVILLRNNVNQMVYKHAISTVVPARNV. Residues 70–89 are disordered; it reads TAPPVPTETHAQSSEEFGNI. Polar residues predominate over residues 78–89; that stretch reads THAQSSEEFGNI.

It belongs to the Hfq family. In terms of assembly, homohexamer.

RNA chaperone that binds small regulatory RNA (sRNAs) and mRNAs to facilitate mRNA translational regulation in response to envelope stress, environmental stress and changes in metabolite concentrations. Also binds with high specificity to tRNAs. This is RNA-binding protein Hfq from Alkalilimnicola ehrlichii (strain ATCC BAA-1101 / DSM 17681 / MLHE-1).